The following is a 399-amino-acid chain: Trimethyllysine dioxygenase (399 aa).

3 residues coordinate Fe cation: H214, D216, and H360.

Belongs to the gamma-BBH/TMLD family. Fe(2+) serves as cofactor. L-ascorbate is required as a cofactor.

The protein localises to the cytoplasm. The catalysed reaction is N(6),N(6),N(6)-trimethyl-L-lysine + 2-oxoglutarate + O2 = (3S)-3-hydroxy-N(6),N(6),N(6)-trimethyl-L-lysine + succinate + CO2. The protein operates within amine and polyamine biosynthesis; carnitine biosynthesis. In terms of biological role, converts trimethyllysine (TML) into hydroxytrimethyllysine (HTML). This chain is Trimethyllysine dioxygenase, found in Meyerozyma guilliermondii (strain ATCC 6260 / CBS 566 / DSM 6381 / JCM 1539 / NBRC 10279 / NRRL Y-324) (Yeast).